We begin with the raw amino-acid sequence, 264 residues long: 3-methyl-2-oxobutanoate hydroxymethyltransferase (264 aa).

Residues aspartate 45 and aspartate 84 each contribute to the Mg(2+) site. Residues 45–46 (DS), aspartate 84, and lysine 113 each bind 3-methyl-2-oxobutanoate. Glutamate 115 contacts Mg(2+). Glutamate 182 serves as the catalytic Proton acceptor.

The protein belongs to the PanB family. As to quaternary structure, homodecamer; pentamer of dimers. Requires Mg(2+) as cofactor.

Its subcellular location is the cytoplasm. It catalyses the reaction 3-methyl-2-oxobutanoate + (6R)-5,10-methylene-5,6,7,8-tetrahydrofolate + H2O = 2-dehydropantoate + (6S)-5,6,7,8-tetrahydrofolate. It functions in the pathway cofactor biosynthesis; (R)-pantothenate biosynthesis; (R)-pantoate from 3-methyl-2-oxobutanoate: step 1/2. In terms of biological role, catalyzes the reversible reaction in which hydroxymethyl group from 5,10-methylenetetrahydrofolate is transferred onto alpha-ketoisovalerate to form ketopantoate. The polypeptide is 3-methyl-2-oxobutanoate hydroxymethyltransferase (Caldicellulosiruptor bescii (strain ATCC BAA-1888 / DSM 6725 / KCTC 15123 / Z-1320) (Anaerocellum thermophilum)).